Consider the following 869-residue polypeptide: Translation initiation factor IF-2 (869 aa).

2 disordered regions span residues 51 to 78 (KQHG…NMGK) and 105 to 277 (EEET…SDLK). The span at 67–76 (QRKTTSTLNM) shows a compositional bias: polar residues. Over residues 110–119 (RALAEQQAQL) the composition is skewed to low complexity. Basic and acidic residues predominate over residues 120–241 (EAEKAAAEEA…KKQEAEEVHV (122 aa)). Residues 369 to 542 (SRAPVVTIMG…ELLDLKAPPT (174 aa)) form the tr-type G domain. The interval 378–385 (GHVDHGKT) is G1. A GTP-binding site is contributed by 378 to 385 (GHVDHGKT). Residues 403–407 (GITQH) are G2. Residues 424–427 (DTPG) are G3. GTP contacts are provided by residues 424–428 (DTPGH) and 478–481 (NKMD). A G4 region spans residues 478-481 (NKMD). The G5 stretch occupies residues 514–516 (SAK).

The protein belongs to the TRAFAC class translation factor GTPase superfamily. Classic translation factor GTPase family. IF-2 subfamily.

It localises to the cytoplasm. Its function is as follows. One of the essential components for the initiation of protein synthesis. Protects formylmethionyl-tRNA from spontaneous hydrolysis and promotes its binding to the 30S ribosomal subunits. Also involved in the hydrolysis of GTP during the formation of the 70S ribosomal complex. In Pseudoalteromonas atlantica (strain T6c / ATCC BAA-1087), this protein is Translation initiation factor IF-2.